The following is a 1379-amino-acid chain: ABC multidrug transporter MDR2 (1379 aa).

The helical transmembrane segment at 65–85 threads the bilayer; that stretch reads IALIVIGTIAGIGAGIPFPLL. Residues 69–367 form the ABC transmembrane type-1 1 domain; the sequence is VIGTIAGIGA…MAPFMHIFAS (299 aa). A glycan (N-linked (GlcNAc...) asparagine) is linked at Asn-97. The next 5 membrane-spanning stretches (helical) occupy residues 119 to 139, 193 to 213, 215 to 235, 301 to 321, and 336 to 356; these read VLQVIYVSILNFVCMYIHTGC, KVGLFIGTISYFVAAYIVAFL, VATIAAMLMSVVPIYFLMAFG, IQFGMLYFVAYASNALAFWQG, and VSVGAVYTVIFVLLDASFVLS. Residues 403–682 enclose the ABC transporter 1 domain; that stretch reads IELQDVTFNY…DGVYAGMVRL (280 aa). Residue 438–445 participates in ATP binding; it reads GTSGSGKS. Asn-552 and Asn-633 each carry an N-linked (GlcNAc...) asparagine glycan. The segment at 738–758 is disordered; that stretch reads YMPEEADSLPTEPENEKEKPK. 4 helical membrane-spanning segments follow: residues 781–801, 820–840, 901–921, and 922–942; these read LGLITSIMIGVSYTGEAVIFG, GMLFGLLFFILAIVKFAAVIV, IGVLFSTVANLFAGVILSHVI, and AWRIAVVLLATLPVLLASGVL. One can recognise an ABC transmembrane type-1 2 domain in the interval 781–1068; sequence LGLITSIMIG…MFALVPDISK (288 aa). N-linked (GlcNAc...) asparagine glycosylation is present at Asn-989. The next 2 membrane-spanning stretches (helical) occupy residues 1008-1028 and 1032-1052; these read FWLSLAYSISTLVYALAYWWG and ILAGMYTQVQFFIVLPALLFS. The ABC transporter 2 domain maps to 1135 to 1374; the sequence is VQFRNVHFRY…CESYRANVIH (240 aa). An ATP-binding site is contributed by 1170 to 1177; sequence GPSGSGKS.

It belongs to the ABC transporter superfamily. ABCB family. Multidrug resistance exporter (TC 3.A.1.201) subfamily.

It localises to the cell membrane. Its function is as follows. Pleiotropic ABC efflux transporter that may be involved in the modulation susceptibility to a wide range of unrelated cytotoxic compounds. The chain is ABC multidrug transporter MDR2 from Trichophyton equinum (strain ATCC MYA-4606 / CBS 127.97) (Horse ringworm fungus).